A 378-amino-acid polypeptide reads, in one-letter code: Myoglobin (378 aa).

Histidine 332 provides a ligand contact to heme.

Belongs to the indoleamine 2,3-dioxygenase family. As to quaternary structure, homodimer. Heme serves as cofactor.

Serves a reserve supply of oxygen and facilitates the movement of oxygen within muscles. The protein is Myoglobin of Haliotis madaka (Giant abalone).